Here is a 157-residue protein sequence, read N- to C-terminus: N5-carboxyaminoimidazole ribonucleotide mutase (157 aa).

3 residues coordinate substrate: S8, D11, and R38.

Belongs to the AIR carboxylase family. Class I subfamily.

The enzyme catalyses 5-carboxyamino-1-(5-phospho-D-ribosyl)imidazole + H(+) = 5-amino-1-(5-phospho-D-ribosyl)imidazole-4-carboxylate. The protein operates within purine metabolism; IMP biosynthesis via de novo pathway; 5-amino-1-(5-phospho-D-ribosyl)imidazole-4-carboxylate from 5-amino-1-(5-phospho-D-ribosyl)imidazole (N5-CAIR route): step 2/2. Catalyzes the conversion of N5-carboxyaminoimidazole ribonucleotide (N5-CAIR) to 4-carboxy-5-aminoimidazole ribonucleotide (CAIR). This Methanocaldococcus jannaschii (strain ATCC 43067 / DSM 2661 / JAL-1 / JCM 10045 / NBRC 100440) (Methanococcus jannaschii) protein is N5-carboxyaminoimidazole ribonucleotide mutase.